A 1215-amino-acid polypeptide reads, in one-letter code: MTKKSFVSSPIVRDSTLLVPKSLIAKPYVLPFFPLYATFAQLYFQQYDRYIKGPEWTFVYLGTLVSLNILVMLMPAWNVKIKAKFNYSTTKNVNEATHILIYTTPNNGSDGIVEIQRVTEAGSLQTFFQFQKKRFLWHENEQVFSSPKFLVDESPKIGDFQKCKGHSGDLTHLKRLYGENSFDIPIPTFMELFKEHAVAPLFVFQVFCVALWLLDEFWYYSLFNLFMIISMEAAAVFQRLTALKEFRTMGIKPYTINVFRNKKWVALQTNELLPMDLVSITRTAEESAIPCDLILLDGSAIVNEAMLSGESTPLLKESIKLRPSEDNLQLDGVDKIAVLHGGTKALQVTPPEHKSDIPPPPDGGALAIVTKTGFETSQGSLVRVMIYSAERVSVDNKEALMFILFLLIFAVIASWYVWVEGTKMGRIQSKLILDCILIITSVVPPELPMELTMAVNSSLAALAKFYVYCTEPFRIPFAGRIDVCCFDKTGTLTGEDLVFEGLAGISADSENIRHLYSAAEAPESTILVIGAAHALVKLEDGDIVGDPMEKATLKAVGWAVERKNSNYREGTGKLDIIRRFQFSSALKRSASIASHNDALFAAVKGAPETIRERLSDIPKNYDEIYKSFTRSGSRVLALASKSLPKMSQSKIDDLNRDDVESELTFNGFLIFHCPLKDDAIETIKMLNESSHRSIMITGDNPLTAVHVAKEVGIVFGETLILDRAGKSDDNQLLFRDVEETVSIPFDPSKDTFDHSKLFDRYDIAVTGYALNALEGHSQLRDLLRHTWVYARVSPSQKEFLLNTLKDMGYQTLMCGDGTNDVGALKQAHVGIALLNGTEEGLKKLGEQRRLEGMKMMYIKQTEFMARWNQPQPPVPEPIAHLFPPGPKNPHYLKALESKGTVITPEIRKAVEEANSKPVEVIKPNGLSEKKPADLASLLLNSAGDAQGDEAPALKLGDASCAAPFTSKLANVSAVTNIIRQGRCALVNTIQMYKILALNCLISAYSLSIIYMAGVKFGDGQATVSGLLLSVCFLSISRGKPLEKLSKQRPQSGIFNVYIMGSILSQFAVHIATLVYITTEIYKLEPREPQVDLEKEFAPSLLNTGIFIIQLVQQVSTFAVNYQGEPFRENIRSNKGMYYGLLGVTGLALASATEFLPELNEAMKFVPMTDDFKIKLTLTLLLDFFGSWGVEHFFKFFFMDDKPSDISVQQVKIASK.

Over 1-27 the chain is Cytoplasmic; that stretch reads MTKKSFVSSPIVRDSTLLVPKSLIAKP. The helical transmembrane segment at 28–43 threads the bilayer; sequence YVLPFFPLYATFAQLY. The Lumenal segment spans residues 44–56; the sequence is FQQYDRYIKGPEW. The helical transmembrane segment at 57-76 threads the bilayer; sequence TFVYLGTLVSLNILVMLMPA. Topologically, residues 77 to 188 are cytoplasmic; it reads WNVKIKAKFN…ENSFDIPIPT (112 aa). Residues 156 to 185 form an A-domain; part 1 region; the sequence is KIGDFQKCKGHSGDLTHLKRLYGENSFDIP. Residues 189-216 traverse the membrane as a helical segment; that stretch reads FMELFKEHAVAPLFVFQVFCVALWLLDE. Residue F217 is a topological domain, lumenal. Residues 218–246 form a helical membrane-spanning segment; sequence WYYSLFNLFMIISMEAAAVFQRLTALKEF. The Cytoplasmic portion of the chain corresponds to 247 to 395; that stretch reads RTMGIKPYTI…IYSAERVSVD (149 aa). The segment at 250–390 is A-domain; part 2; that stretch reads GIKPYTINVF…LVRVMIYSAE (141 aa). At S324 the chain carries Phosphoserine. Residues 396–425 traverse the membrane as a helical segment; the sequence is NKEALMFILFLLIFAVIASWYVWVEGTKMG. Over 426–427 the chain is Lumenal; sequence RI. 2 helical membrane passes run 428–442 and 446–464; these read QSKL…ITSV and ELPM…ALAK. The Cytoplasmic portion of the chain corresponds to 465-971; it reads FYVYCTEPFR…APFTSKLANV (507 aa). Residues 466–495 are P-domain; part 1; it reads YVYCTEPFRIPFAGRIDVCCFDKTGTLTGE. D487 serves as the catalytic 4-aspartylphosphate intermediate. Mg(2+) is bound by residues D487 and T489. ATP contacts are provided by residues 487-489, F582, R634, D699, and 816-820; these read DKT and DGTND. Residues 497–674 are N-domain; sequence LVFEGLAGIS…FNGFLIFHCP (178 aa). The interval 677–837 is P-domain; part 2; that stretch reads DDAIETIKML…HVGIALLNGT (161 aa). D816 lines the Mg(2+) pocket. An arm-like region spans residues 838–953; that stretch reads EEGLKKLGEQ…DAQGDEAPAL (116 aa). S936 carries the phosphoserine modification. The P-domain; part 3 stretch occupies residues 954 to 969; it reads KLGDASCAAPFTSKLA. The chain crosses the membrane as a helical span at residues 972–1011; that stretch reads SAVTNIIRQGRCALVNTIQMYKILALNCLISAYSLSIIYM. Residues 1012 to 1017 lie on the Lumenal side of the membrane; it reads AGVKFG. The helical transmembrane segment at 1018–1035 threads the bilayer; sequence DGQATVSGLLLSVCFLSI. The Cytoplasmic portion of the chain corresponds to 1036 to 1055; the sequence is SRGKPLEKLSKQRPQSGIFN. Residues 1056 to 1084 traverse the membrane as a helical segment; sequence VYIMGSILSQFAVHIATLVYITTEIYKLE. Over 1085 to 1099 the chain is Lumenal; that stretch reads PREPQVDLEKEFAPS. A helical transmembrane segment spans residues 1100–1121; sequence LLNTGIFIIQLVQQVSTFAVNY. At 1122–1133 the chain is on the cytoplasmic side; that stretch reads QGEPFRENIRSN. The chain crosses the membrane as a helical span at residues 1134-1151; the sequence is KGMYYGLLGVTGLALASA. At 1152-1168 the chain is on the lumenal side; sequence TEFLPELNEAMKFVPMT. A helical membrane pass occupies residues 1169-1197; sequence DDFKIKLTLTLLLDFFGSWGVEHFFKFFF. The Cytoplasmic portion of the chain corresponds to 1198–1215; that stretch reads MDDKPSDISVQQVKIASK.

Belongs to the cation transport ATPase (P-type) (TC 3.A.3) family. Type V subfamily. Requires Mg(2+) as cofactor.

Its subcellular location is the endoplasmic reticulum membrane. The enzyme catalyses [protein]-with a C-terminal TM segment(out) + ATP + H2O = [protein]-with a C-terminal TM segment(in) + ADP + phosphate + H(+). With respect to regulation, the ATPase activity is stimulated by phosphatidylinositol 4-phosphate (PI4P). In terms of biological role, endoplasmic reticulum translocase required to remove mitochondrial transmembrane proteins mistargeted to the endoplasmic reticulum. Acts as a dislocase that mediates the ATP-dependent extraction of mislocalized mitochondrial transmembrane proteins from the endoplasmic reticulum membrane. Specifically binds mitochondrial tail-anchored transmembrane proteins: has an atypically large substrate-binding pocket that recognizes and binds moderately hydrophobic transmembranes with short hydrophilic lumenal domains. The sequence is that of Endoplasmic reticulum transmembrane helix translocase from Saccharomyces cerevisiae (strain ATCC 204508 / S288c) (Baker's yeast).